The primary structure comprises 187 residues: UPF0232 protein JTY_0004 (187 aa).

Basic and acidic residues-rich tracts occupy residues 1-17 and 24-45; these read MTGS…ERSM and LVRR…DAGR. Disordered stretches follow at residues 1–75 and 168–187; these read MTGS…DPQP and PSWR…DTYG.

It belongs to the UPF0232 family.

In Mycobacterium bovis (strain BCG / Tokyo 172 / ATCC 35737 / TMC 1019), this protein is UPF0232 protein JTY_0004.